We begin with the raw amino-acid sequence, 282 residues long: MQEIFLCSISNVRSGDCKEDCAYCTQSSHHQGAIKRYKFKDEKVVLQEARALRELGALGFCLVTSGRELDDEKCEYIAKLAKAINQEELGLHLIACCGRADLDQLEFLRDAGIHSYNHNLETSQNFFPKICSTHTWEERFITCENALRAGLGLCSGGIFGLNESWEDRIEMLRALASLSPHTTPINFFIKNPVLPIDAETLSADEALECVLLAKEFLPNARLMAAGGREVVFKDNDKKEAKLFEYGINAVVLGDYLTTKGKAPKKDIERLLSYGLKMAASCH.

The 228-residue stretch at 1–228 (MQEIFLCSIS…NARLMAAGGR (228 aa)) folds into the Radical SAM core domain. [4Fe-4S] cluster contacts are provided by cysteine 17, cysteine 21, and cysteine 24. Positions 61, 96, 154, and 221 each coordinate [2Fe-2S] cluster.

The protein belongs to the radical SAM superfamily. Biotin synthase family. As to quaternary structure, homodimer. Requires [4Fe-4S] cluster as cofactor. The cofactor is [2Fe-2S] cluster.

The catalysed reaction is (4R,5S)-dethiobiotin + (sulfur carrier)-SH + 2 reduced [2Fe-2S]-[ferredoxin] + 2 S-adenosyl-L-methionine = (sulfur carrier)-H + biotin + 2 5'-deoxyadenosine + 2 L-methionine + 2 oxidized [2Fe-2S]-[ferredoxin]. It functions in the pathway cofactor biosynthesis; biotin biosynthesis; biotin from 7,8-diaminononanoate: step 2/2. In terms of biological role, catalyzes the conversion of dethiobiotin (DTB) to biotin by the insertion of a sulfur atom into dethiobiotin via a radical-based mechanism. The sequence is that of Biotin synthase from Helicobacter acinonychis (strain Sheeba).